A 713-amino-acid chain; its full sequence is Cytosolic endo-beta-N-acetylglucosaminidase (713 aa).

A disordered region spans residues 1–36 (MIARKRKSNGSETTSGKIPKDDVSSESCLDQPADES). Residues 270–362 (FFDACDGFFT…DFRQNQDKFW (93 aa)) form the BRCT domain.

It belongs to the glycosyl hydrolase 85 family.

It localises to the cytoplasm. The protein resides in the cytosol. The catalysed reaction is an N(4)-(oligosaccharide-(1-&gt;3)-[oligosaccharide-(1-&gt;6)]-beta-D-Man-(1-&gt;4)-beta-D-GlcNAc-(1-&gt;4)-alpha-D-GlcNAc)-L-asparaginyl-[protein] + H2O = an oligosaccharide-(1-&gt;3)-[oligosaccharide-(1-&gt;6)]-beta-D-Man-(1-&gt;4)-D-GlcNAc + N(4)-(N-acetyl-beta-D-glucosaminyl)-L-asparaginyl-[protein]. Its function is as follows. Endoglycosidase that releases N-glycans from glycoproteins by cleaving the beta-1,4-glycosidic bond in the N,N'-diacetylchitobiose core. Involved in the processing of free oligosaccharides in the cytosol. The chain is Cytosolic endo-beta-N-acetylglucosaminidase (engase) from Danio rerio (Zebrafish).